Consider the following 141-residue polypeptide: Hemoglobin subunit alpha-D (141 aa).

Residues 1 to 141 (MLNHDEKQLI…VSAVLAEKYR (141 aa)) form the Globin domain. Positions 58 and 87 each coordinate heme b.

This sequence belongs to the globin family. In terms of assembly, heterotetramer of two alpha-D chains and two beta chains. As to expression, red blood cells.

Its function is as follows. Involved in oxygen transport from the lung to the various peripheral tissues. The protein is Hemoglobin subunit alpha-D (HBAD) of Chrysemys picta bellii (Western painted turtle).